The primary structure comprises 437 residues: MGNKPTIAISHLGCEKNRIDSEHMLGLLAKAGYPVDNDEELADYVIVNTCSFIQAAREESVRTLVELAEANKKIIISGCMAQHFQDELLTELPEAVAIVGTGDYQKIVEIVERVETGERVKEVSADPTFIADENLPRYRTTSEGVAYLRVAEGCDYRCAFCIIPQLRGDQRSRSIESIVAEARQLASQGVQELILISQITTNYGLDLYGEPKLAELLRALGEVDIPWIRVHYAYPTGLTPKVIEAIRETPNVLPYLDLPLQHSHPDILRGMNRPWQGRVNDGIIERIKQAIPNAVLRTTFIVGFPGETEEHFSHLLEFVKRHEFDHVGVFTFSAEEGTAAFDLPDPVPQAIMDERRERLMLTQQPISERKNQAYIGQTVDVLIEQENPETGELIGRSARFSPEVDGLVYVTGEAILGAIVQVRITAADTYDLYGEIV.

One can recognise an MTTase N-terminal domain in the interval 5–116; the sequence is PTIAISHLGC…IVEIVERVET (112 aa). [4Fe-4S] cluster contacts are provided by Cys14, Cys50, Cys79, Cys154, Cys158, and Cys161. One can recognise a Radical SAM core domain in the interval 140–369; the sequence is TTSEGVAYLR…MLTQQPISER (230 aa). The region spanning 372 to 437 is the TRAM domain; sequence QAYIGQTVDV…DTYDLYGEIV (66 aa).

The protein belongs to the methylthiotransferase family. RimO subfamily. The cofactor is [4Fe-4S] cluster.

The protein resides in the cytoplasm. It catalyses the reaction L-aspartate(89)-[ribosomal protein uS12]-hydrogen + (sulfur carrier)-SH + AH2 + 2 S-adenosyl-L-methionine = 3-methylsulfanyl-L-aspartate(89)-[ribosomal protein uS12]-hydrogen + (sulfur carrier)-H + 5'-deoxyadenosine + L-methionine + A + S-adenosyl-L-homocysteine + 2 H(+). Catalyzes the methylthiolation of an aspartic acid residue of ribosomal protein uS12. This Microcystis aeruginosa (strain NIES-843 / IAM M-2473) protein is Ribosomal protein uS12 methylthiotransferase RimO.